Here is a 351-residue protein sequence, read N- to C-terminus: Protein MSS2, mitochondrial (351 aa).

TPR repeat units lie at residues 155–188 (HLTV…ENST) and 260–294 (KECF…MDLE).

Interacts with COX18.

Its subcellular location is the mitochondrion inner membrane. Functionally, required to stabilize mitochondrial cytochrome C oxidase subunit 2 (COX2) and to translocate the C-terminal domain of COX2 through the inner membrane. This chain is Protein MSS2, mitochondrial (MSS2), found in Saccharomyces cerevisiae (strain ATCC 204508 / S288c) (Baker's yeast).